The primary structure comprises 344 residues: Ferrochelatase (344 aa).

Residues histidine 214 and glutamate 295 each contribute to the Fe cation site.

This sequence belongs to the ferrochelatase family.

The protein resides in the cytoplasm. It catalyses the reaction heme b + 2 H(+) = protoporphyrin IX + Fe(2+). The protein operates within porphyrin-containing compound metabolism; protoheme biosynthesis; protoheme from protoporphyrin-IX: step 1/1. Its function is as follows. Catalyzes the ferrous insertion into protoporphyrin IX. This chain is Ferrochelatase, found in Rhizobium etli (strain ATCC 51251 / DSM 11541 / JCM 21823 / NBRC 15573 / CFN 42).